The following is a 378-amino-acid chain: Gibberellin 20 oxidase 2 (378 aa).

A compositionally biased stretch (polar residues) spans 1–10 (MAILCTTTSP). The interval 1 to 26 (MAILCTTTSPAEKEHEPKQDLEKDQT) is disordered. Positions 11–25 (AEKEHEPKQDLEKDQ) are enriched in basic and acidic residues. One can recognise a Fe2OG dioxygenase domain in the interval 220–320 (ENDSIMRLNH…RKSMAFFLCP (101 aa)). Fe cation contacts are provided by histidine 245, aspartate 247, and histidine 301. The active site involves arginine 311.

The protein belongs to the iron/ascorbate-dependent oxidoreductase family. GA20OX subfamily. Requires Fe(2+) as cofactor. It depends on L-ascorbate as a cofactor. As to expression, expressed in inflorescence and developing siliques. Detected in seeds, roots, cotyledons and leaves. In seeds, specifically detected at the rim of the embryo and the outer integument.

It catalyses the reaction gibberellin A12 + 2 2-oxoglutarate + 3 O2 + H(+) = gibberellin A9 + 2 succinate + 3 CO2 + 2 H2O. The enzyme catalyses gibberellin A12 + 2-oxoglutarate + O2 = gibberellin A15 + succinate + CO2. It carries out the reaction gibberellin A15 + 2-oxoglutarate + O2 = gibberellin A24 + succinate + CO2 + H2O. The catalysed reaction is gibberellin A53 + 2-oxoglutarate + O2 = gibberellin A44 + succinate + CO2. It catalyses the reaction gibberellin A12 + 3 2-oxoglutarate + 3 O2 = gibberellin A25 + 3 succinate + 3 CO2 + H2O + H(+). It functions in the pathway plant hormone biosynthesis; gibberellin biosynthesis. In terms of biological role, key oxidase enzyme in the biosynthesis of gibberellin that catalyzes the conversion of GA12 to GA9, via a three-step oxidation at C-20 of the GA skeleton, and GA25 is also formed as a minor product. GA53 is less effectively oxidized than GA12 and is only oxidized one step to GA44. Involved in the promotion of the floral transition, fertility and silique elongation, but plays only a minor role in elongation of seedling organs. Acts redundantly with GA20OX1. The chain is Gibberellin 20 oxidase 2 (GA20OX2) from Arabidopsis thaliana (Mouse-ear cress).